The sequence spans 343 residues: Aldehyde reductase 2 (343 aa).

Y177 contacts NADP(+).

Belongs to the NAD(P)-dependent epimerase/dehydratase family. Dihydroflavonol-4-reductase subfamily. In terms of assembly, monomer.

It carries out the reaction a primary alcohol + NADP(+) = an aldehyde + NADPH + H(+). Inhibited by quercetin and diphenylhydantoin. Functionally, catalyzes the asymmetric reduction of o-substituted aliphatic and aromatic aldehydes and ketones to an S-enantiomer. Reduces ethyl 4-chloro-3-oxobutanoate to ethyl (S)-4-chloro-3-hydroxybutanoate. The polypeptide is Aldehyde reductase 2 (Sporidiobolus salmonicolor (Yeast-like fungus)).